Consider the following 220-residue polypeptide: Ribose-5-phosphate isomerase A (220 aa).

Residues 28–31, 81–84, and 94–97 each bind substrate; these read TGST, DGAD, and KGGG. Catalysis depends on Glu103, which acts as the Proton acceptor. Lys121 contacts substrate.

This sequence belongs to the ribose 5-phosphate isomerase family. As to quaternary structure, homodimer.

The catalysed reaction is aldehydo-D-ribose 5-phosphate = D-ribulose 5-phosphate. It participates in carbohydrate degradation; pentose phosphate pathway; D-ribose 5-phosphate from D-ribulose 5-phosphate (non-oxidative stage): step 1/1. Its function is as follows. Catalyzes the reversible conversion of ribose-5-phosphate to ribulose 5-phosphate. In Shewanella baltica (strain OS185), this protein is Ribose-5-phosphate isomerase A.